The sequence spans 206 residues: Small ribosomal subunit protein uS4 (206 aa).

Residues 96–157 (QRLDNVVYRM…KAKKQARIGA (62 aa)) enclose the S4 RNA-binding domain.

This sequence belongs to the universal ribosomal protein uS4 family. As to quaternary structure, part of the 30S ribosomal subunit. Contacts protein S5. The interaction surface between S4 and S5 is involved in control of translational fidelity.

One of the primary rRNA binding proteins, it binds directly to 16S rRNA where it nucleates assembly of the body of the 30S subunit. Its function is as follows. With S5 and S12 plays an important role in translational accuracy. This Idiomarina loihiensis (strain ATCC BAA-735 / DSM 15497 / L2-TR) protein is Small ribosomal subunit protein uS4.